The primary structure comprises 99 residues: Putative type 4B encapsulin shell protein PF1875 (99 aa).

Belongs to the encapsulin family. Family 4B subfamily. May self-assemble into facets and potentially into larger complexes.

Its subcellular location is the encapsulin nanocompartment. In terms of biological role, may be the encapsulin shell protein in a type 4 A-domain encapsulin nanocompartment system. Its cargo may be upstream glyceraldehyde-3-phosphate dehydrogenase (AC P61879). The polypeptide is Putative type 4B encapsulin shell protein PF1875 (Pyrococcus furiosus (strain ATCC 43587 / DSM 3638 / JCM 8422 / Vc1)).